We begin with the raw amino-acid sequence, 186 residues long: Membrane protein Rv1476 (186 aa).

A helical transmembrane segment spans residues 138–158; it reads FPWSALTIVLLIGVLAAAVGA. The disordered stretch occupies residues 166–186; the sequence is RRSATSTDAAPGAGDDLNQGV.

It is found in the membrane. May affect the expression of genes linked to host macrophage apoptosis and immune response, thereby promoting the survival of M.tuberculosis in host macrophages. Overexpression of the gene increases susceptibility of the bacteria to various stresses, but promotes intracellular survival in host macrophages. It has no impact on the growth rate in vitro. Overexpression causes changes in the transcriptome of THP-1 cells, including expression of genes involved in cell proliferation, fatty acid degradation, cytokine-cytokine receptor interaction and immune response pathways. This chain is Membrane protein Rv1476, found in Mycobacterium tuberculosis (strain ATCC 25618 / H37Rv).